We begin with the raw amino-acid sequence, 226 residues long: Lipoprotein-releasing system ATP-binding protein LolD (226 aa).

Positions 5–226 constitute an ABC transporter domain; sequence LKATNINKIY…LLRNGHWENY (222 aa). 41 to 48 contributes to the ATP binding site; that stretch reads GTSGSGKS.

This sequence belongs to the ABC transporter superfamily. Lipoprotein translocase (TC 3.A.1.125) family. The complex is composed of two ATP-binding proteins (LolD) and two transmembrane proteins (LolC and LolE).

It is found in the cell inner membrane. Functionally, part of the ABC transporter complex LolCDE involved in the translocation of mature outer membrane-directed lipoproteins, from the inner membrane to the periplasmic chaperone, LolA. Responsible for the formation of the LolA-lipoprotein complex in an ATP-dependent manner. This Psychrobacter cryohalolentis (strain ATCC BAA-1226 / DSM 17306 / VKM B-2378 / K5) protein is Lipoprotein-releasing system ATP-binding protein LolD.